The primary structure comprises 588 residues: Aspartate--tRNA ligase (588 aa).

Residue Glu174 participates in L-aspartate binding. An aspartate region spans residues 198–201 (QLFK). Arg220 provides a ligand contact to L-aspartate. Residues 220–222 (RDE) and Gln229 contribute to the ATP site. His448 is an L-aspartate binding site. ATP is bound at residue Glu482. An L-aspartate-binding site is contributed by Arg489. Residue 534-537 (GIDR) coordinates ATP.

It belongs to the class-II aminoacyl-tRNA synthetase family. Type 1 subfamily. Homodimer.

The protein localises to the cytoplasm. The catalysed reaction is tRNA(Asp) + L-aspartate + ATP = L-aspartyl-tRNA(Asp) + AMP + diphosphate. Functionally, catalyzes the attachment of L-aspartate to tRNA(Asp) in a two-step reaction: L-aspartate is first activated by ATP to form Asp-AMP and then transferred to the acceptor end of tRNA(Asp). The polypeptide is Aspartate--tRNA ligase (Xanthomonas campestris pv. campestris (strain 8004)).